Here is a 409-residue protein sequence, read N- to C-terminus: Putative competence-damage inducible protein (409 aa).

This sequence belongs to the CinA family.

This chain is Putative competence-damage inducible protein, found in Clostridium botulinum (strain 657 / Type Ba4).